Consider the following 861-residue polypeptide: E3 ubiquitin-protein ligase SH3RF1 (861 aa).

The RING-type zinc-finger motif lies at 12-53 (CPVCLERLDASAKVLPCQHTFCKRCLLGIVSSRNELRCPECR). 2 consecutive SH3 domains span residues 132–191 (PQLP…IIKP) and 194–257 (QPPP…FNSA). Positions 268–319 (SGVDTGEGSSGTTHSSNSQKQADAKKNTKKRHSFTSLTMSNKSSQSVQNRHS) are disordered. Over residues 273 to 285 (GEGSSGTTHSSNS) the composition is skewed to low complexity. Positions 301 to 317 (FTSLTMSNKSSQSVQNR) are enriched in polar residues. Residues 435–496 (TRPSVFVAIY…PGNYVAPVTR (62 aa)) form the SH3 3 domain. Positions 684 to 731 (NSAANKQDKDSKKEKKGLLKLLSGASTKRKPRSSPPHSPTQELEQTNS) are disordered. Basic and acidic residues predominate over residues 689-700 (KQDKDSKKEKKG). The SH3 4 domain maps to 802 to 861 (RPCERYRVVVSYPPQSEAELELKEGDIVFVHKKREDGWFKGTLQRNGKTGLFPGSFVENI).

It belongs to the SH3RF family. Autoubiquitinated. Ubiquitinated by SH3RF2, leading to proteasome-mediated degradation.

Its subcellular location is the cytoplasm. It is found in the perinuclear region. The protein resides in the cell projection. The protein localises to the lamellipodium. It localises to the golgi apparatus. Its subcellular location is the trans-Golgi network. The catalysed reaction is S-ubiquitinyl-[E2 ubiquitin-conjugating enzyme]-L-cysteine + [acceptor protein]-L-lysine = [E2 ubiquitin-conjugating enzyme]-L-cysteine + N(6)-ubiquitinyl-[acceptor protein]-L-lysine.. It participates in protein modification; protein ubiquitination. In terms of biological role, has E3 ubiquitin-protein ligase activity. In the absence of an external substrate, it can catalyze self-ubiquitination. Acts as a scaffold protein that contributes to the effective activation of the JNK signaling pathway. The chain is E3 ubiquitin-protein ligase SH3RF1 (sh3rf1) from Xenopus tropicalis (Western clawed frog).